The following is a 276-amino-acid chain: NADPH-dependent 7-cyano-7-deazaguanine reductase (276 aa).

83–85 (IES) is a substrate binding site. An NADPH-binding site is contributed by 85 to 86 (SK). Cys184 functions as the Thioimide intermediate in the catalytic mechanism. Asp191 (proton donor) is an active-site residue. Residue 223–224 (HE) coordinates substrate. 252–253 (RG) provides a ligand contact to NADPH.

The protein belongs to the GTP cyclohydrolase I family. QueF type 2 subfamily. Homodimer.

It is found in the cytoplasm. It catalyses the reaction 7-aminomethyl-7-carbaguanine + 2 NADP(+) = 7-cyano-7-deazaguanine + 2 NADPH + 3 H(+). It participates in tRNA modification; tRNA-queuosine biosynthesis. In terms of biological role, catalyzes the NADPH-dependent reduction of 7-cyano-7-deazaguanine (preQ0) to 7-aminomethyl-7-deazaguanine (preQ1). This chain is NADPH-dependent 7-cyano-7-deazaguanine reductase, found in Pseudomonas fluorescens (strain ATCC BAA-477 / NRRL B-23932 / Pf-5).